The sequence spans 100 residues: MAPPTCRLLSAALVLLLLLATNHQATGAVVASELRCQCLNTLPRVDFETIQSLTVTPPGPHCTQTEVIATLKDGQEVCLNPQGPRLQIIIKKILKSGKSS.

The N-terminal stretch at 1–31 is a signal peptide; sequence MAPPTCRLLSAALVLLLLLATNHQATGAVVA. 2 disulfide bridges follow: C36-C62 and C38-C78.

This sequence belongs to the intercrine alpha (chemokine CxC) family.

The protein localises to the secreted. Functionally, ligand for CXCR2. Has chemotactic activity for neutrophils. May play a role in inflammation and exert its effects on endothelial cells in an autocrine fashion. This Mus musculus (Mouse) protein is C-X-C motif chemokine 3.